A 70-amino-acid polypeptide reads, in one-letter code: DNA gyrase inhibitor YacG (70 aa).

Residues C21, C24, C36, and C40 each contribute to the Zn(2+) site.

Belongs to the DNA gyrase inhibitor YacG family. As to quaternary structure, interacts with GyrB. The cofactor is Zn(2+).

In terms of biological role, inhibits all the catalytic activities of DNA gyrase by preventing its interaction with DNA. Acts by binding directly to the C-terminal domain of GyrB, which probably disrupts DNA binding by the gyrase. The protein is DNA gyrase inhibitor YacG of Sinorhizobium medicae (strain WSM419) (Ensifer medicae).